The following is a 568-amino-acid chain: Protein OCTOPUS-like (568 aa).

Disordered regions lie at residues 1-27 (MNLS…RLST), 78-99 (LFKP…RPGF), 168-203 (EEAE…ELKP), 242-276 (QKQK…PRFS), 360-428 (PGGS…DKKS), 446-512 (DDEE…SKDG), and 526-558 (RSWK…SHGH). Residues 82 to 93 (SSSGTNNSNGNG) are compositionally biased toward low complexity. Acidic residues predominate over residues 168–179 (EEAEIEEDEENG). Residues 180-193 (EKDPGEIVEEKSSE) are compositionally biased toward basic and acidic residues. Serine 260 is modified (phosphoserine). The segment covering 400–423 (SVSNSTTTIDSNSMETAENKGNQN) has biased composition (polar residues). Residues 532-546 (GGSGGGGGGGGGGGW) are compositionally biased toward gly residues.

It belongs to the OCTOPUS family. In terms of processing, phosphorylation at Ser-260 amplifies the promotion of protophloem differentiation.

It localises to the cell membrane. Its subcellular location is the cytoplasm. Potentiates primary root protophloem differentiation. Regulates roots architecture. This chain is Protein OCTOPUS-like, found in Arabidopsis thaliana (Mouse-ear cress).